The primary structure comprises 66 residues: ATP synthase protein 8 (66 aa).

Residues Thr8–Phe24 form a helical membrane-spanning segment. Lys54 is modified (N6-acetyllysine; alternate). Lys54 is subject to N6-succinyllysine; alternate. At Lys57 the chain carries N6-acetyllysine.

Belongs to the ATPase protein 8 family. F-type ATPases have 2 components, CF(1) - the catalytic core - and CF(0) - the membrane proton channel. Component of an ATP synthase complex composed of ATP5PB, ATP5MC1, ATP5F1E, ATP5PD, ATP5ME, ATP5PF, ATP5MF, MT-ATP6, MT-ATP8, ATP5F1A, ATP5F1B, ATP5F1D, ATP5F1C, ATP5PO, ATP5MG, ATP5MK and ATP5MJ. Interacts with PRICKLE3.

The protein localises to the mitochondrion membrane. Its function is as follows. Mitochondrial membrane ATP synthase (F(1)F(0) ATP synthase or Complex V) produces ATP from ADP in the presence of a proton gradient across the membrane which is generated by electron transport complexes of the respiratory chain. F-type ATPases consist of two structural domains, F(1) - containing the extramembraneous catalytic core and F(0) - containing the membrane proton channel, linked together by a central stalk and a peripheral stalk. During catalysis, ATP synthesis in the catalytic domain of F(1) is coupled via a rotary mechanism of the central stalk subunits to proton translocation. Part of the complex F(0) domain. Minor subunit located with subunit a in the membrane. In Cervus elaphus hippelaphus (European red deer), this protein is ATP synthase protein 8 (MT-ATP8).